A 106-amino-acid chain; its full sequence is A-type ATP synthase subunit F (106 aa).

It belongs to the V-ATPase F subunit family. In terms of assembly, has multiple subunits with at least A(3), B(3), C, D, E, F, H, I and proteolipid K(x).

It localises to the cell membrane. In terms of biological role, component of the A-type ATP synthase that produces ATP from ADP in the presence of a proton gradient across the membrane. The polypeptide is A-type ATP synthase subunit F (Methanosphaera stadtmanae (strain ATCC 43021 / DSM 3091 / JCM 11832 / MCB-3)).